The chain runs to 468 residues: Immunoglobulin superfamily member 21 (468 aa).

The first 24 residues, 1-24 (MRAAPSLRRASCLLLAAILDLARG), serve as a signal peptide directing secretion. Ig-like domains lie at 25 to 132 (YLTV…VVLA) and 344 to 429 (PKIM…TRLI). C46 and C116 are disulfide-bonded.

As to quaternary structure, interacts (Ig-like 1 domain) with NRXN2 (via Laminin G-like 1 domain) in a trans-interaction manner. Expressed in brain.

It localises to the postsynaptic cell membrane. Involved in synaptic inhibition in the brain. Selectively regulates inhibitory presynaptic differentiation through interacting with presynaptic NRXN2. This is Immunoglobulin superfamily member 21 from Rattus norvegicus (Rat).